We begin with the raw amino-acid sequence, 389 residues long: MDRRRFVILVADSVGCGALPDARAYGDEGSDTLGNTSRAVGGLSLPVLGRMGIGHLTPILGVPPEPSPLAFHGRMAERSQGKDTITGHWEMMGIVLSEPLALFPRGFPPEILDPFLRETGLPGVLGNVAASGTEIIRELGEEHQRTGMPIVYTSADSVFQIAAHEETVPLETLYAWCRVARRILDPYRVARVIARPFVGKPGEYVRTYHRKDFSIATPGRTVLEKLVDARVPVVGVGKIPDIFDRKGITDELHTAGNADGLAKTEALLDRVDHGLVFVNLVDFDMLYGHRNDPQGYARALEEMDRALPRILGKLRPGEVAALTADHGCDPTTPSTDHSREYVPLVVHAPGRGGGALGTRGSFADLGATVADFFGVRHETGRSFLGDLGP.

The Mn(2+) site is built by Asp12, Asp284, His289, Asp325, His326, and His337.

It belongs to the phosphopentomutase family. Mn(2+) serves as cofactor.

It is found in the cytoplasm. It carries out the reaction 2-deoxy-alpha-D-ribose 1-phosphate = 2-deoxy-D-ribose 5-phosphate. The enzyme catalyses alpha-D-ribose 1-phosphate = D-ribose 5-phosphate. Its pathway is carbohydrate degradation; 2-deoxy-D-ribose 1-phosphate degradation; D-glyceraldehyde 3-phosphate and acetaldehyde from 2-deoxy-alpha-D-ribose 1-phosphate: step 1/2. Functionally, isomerase that catalyzes the conversion of deoxy-ribose 1-phosphate (dRib-1-P) and ribose 1-phosphate (Rib-1-P) to deoxy-ribose 5-phosphate (dRib-5-P) and ribose 5-phosphate (Rib-5-P), respectively. This chain is Phosphopentomutase, found in Anaeromyxobacter sp. (strain Fw109-5).